Consider the following 429-residue polypeptide: tRNA(Ile2) 2-agmatinylcytidine synthetase TiaS (429 aa).

The OB DNA-binding region spans 271–343 (VRGKVIKKYW…LTLNLEKFYP (73 aa)).

This sequence belongs to the TiaS family.

Its subcellular location is the cytoplasm. It carries out the reaction cytidine(34) in tRNA(Ile2) + agmatine + ATP + H2O = 2-agmatinylcytidine(34) in tRNA(Ile2) + AMP + 2 phosphate + 2 H(+). Functionally, ATP-dependent agmatine transferase that catalyzes the formation of 2-agmatinylcytidine (agm2C) at the wobble position (C34) of tRNA(Ile2), converting the codon specificity from AUG to AUA. The sequence is that of tRNA(Ile2) 2-agmatinylcytidine synthetase TiaS from Thermococcus sibiricus (strain DSM 12597 / MM 739).